We begin with the raw amino-acid sequence, 357 residues long: Protein RecA (357 aa).

Residue Gly74–Thr81 participates in ATP binding.

It belongs to the RecA family.

It localises to the cytoplasm. Can catalyze the hydrolysis of ATP in the presence of single-stranded DNA, the ATP-dependent uptake of single-stranded DNA by duplex DNA, and the ATP-dependent hybridization of homologous single-stranded DNAs. It interacts with LexA causing its activation and leading to its autocatalytic cleavage. This chain is Protein RecA, found in Bordetella petrii (strain ATCC BAA-461 / DSM 12804 / CCUG 43448).